A 95-amino-acid chain; its full sequence is Aspartyl/glutamyl-tRNA(Asn/Gln) amidotransferase subunit C (95 aa).

The protein belongs to the GatC family. In terms of assembly, heterotrimer of A, B and C subunits.

The catalysed reaction is L-glutamyl-tRNA(Gln) + L-glutamine + ATP + H2O = L-glutaminyl-tRNA(Gln) + L-glutamate + ADP + phosphate + H(+). It catalyses the reaction L-aspartyl-tRNA(Asn) + L-glutamine + ATP + H2O = L-asparaginyl-tRNA(Asn) + L-glutamate + ADP + phosphate + 2 H(+). Functionally, allows the formation of correctly charged Asn-tRNA(Asn) or Gln-tRNA(Gln) through the transamidation of misacylated Asp-tRNA(Asn) or Glu-tRNA(Gln) in organisms which lack either or both of asparaginyl-tRNA or glutaminyl-tRNA synthetases. The reaction takes place in the presence of glutamine and ATP through an activated phospho-Asp-tRNA(Asn) or phospho-Glu-tRNA(Gln). The protein is Aspartyl/glutamyl-tRNA(Asn/Gln) amidotransferase subunit C of Campylobacter curvus (strain 525.92).